We begin with the raw amino-acid sequence, 105 residues long: DNA-directed RNA polymerase subunit omega (105 aa).

This sequence belongs to the RNA polymerase subunit omega family. The RNAP catalytic core consists of 2 alpha, 1 beta, 1 beta' and 1 omega subunit. When a sigma factor is associated with the core the holoenzyme is formed, which can initiate transcription.

The catalysed reaction is RNA(n) + a ribonucleoside 5'-triphosphate = RNA(n+1) + diphosphate. In terms of biological role, promotes RNA polymerase assembly. Latches the N- and C-terminal regions of the beta' subunit thereby facilitating its interaction with the beta and alpha subunits. The polypeptide is DNA-directed RNA polymerase subunit omega (Streptococcus equi subsp. equi (strain 4047)).